The sequence spans 818 residues: Sodium/hydrogen exchanger 1 (818 aa).

Residues 1-98 lie on the Extracellular side of the membrane; that stretch reads MLLWPGASGL…FPVLGIDYQH (98 aa). The interval 44-76 is disordered; that stretch reads STIRGSEPPRERSIGDVTTAPPELAPESRPVNH. N-linked (GlcNAc...) asparagine glycosylation occurs at N75. The helical transmembrane segment at 99–121 threads the bilayer; it reads VRIPFEIALWILLACLMKIGFHV. At 122 to 130 the chain is on the cytoplasmic side; that stretch reads IPTISSIVP. A helical membrane pass occupies residues 131-148; the sequence is ESCLLIVVGLLVGGLIKG. Topologically, residues 149 to 158 are extracellular; that stretch reads VGETPPILQS. The chain crosses the membrane as a helical span at residues 159–176; it reads EVFFLFLLPPIILDAGYF. Residues 177 to 186 lie on the Cytoplasmic side of the membrane; it reads LPLRQFTENL. Residues 187-215 traverse the membrane as a helical segment; it reads GTILIFAVVGTLWNAFFLGGLMYAVCLVG. Residues 216–222 are Extracellular-facing; the sequence is GEQINNI. Residues 223–249 form a helical membrane-spanning segment; sequence GLLENLLFGSIISAVDPVAVLAVFEEI. Topologically, residues 250–252 are cytoplasmic; that stretch reads HIN. A helical membrane pass occupies residues 253-283; that stretch reads ELLHILVFGESLLNDAVTVVLYHLFEEFANY. At 284-287 the chain is on the extracellular side; that stretch reads DRVG. Residues 288–322 form a helical membrane-spanning segment; sequence IVDIILGFLSFFVVSLGGVFVGVVYGVIAAFTSRF. The Cytoplasmic portion of the chain corresponds to 323–328; the sequence is TSHIRV. A helical membrane pass occupies residues 329–341; sequence IEPLFVFLYSYMA. Residues 342–350 are Extracellular-facing; that stretch reads YLSAELFHL. Residues 351–371 form a helical membrane-spanning segment; that stretch reads SGIMALIASGVVMRPYVEANI. The Cytoplasmic portion of the chain corresponds to 372–373; that stretch reads SH. Residues 374–404 traverse the membrane as a helical segment; that stretch reads KSHTTIKYFLKMWSSVSETLIFIFLGVSTVA. The Extracellular segment spans residues 405-410; sequence GSHHWN. The helical transmembrane segment at 411–438 threads the bilayer; the sequence is WTFVISTLLFCLIARVLGVLGLTWFINK. The Cytoplasmic segment spans residues 439 to 444; that stretch reads FRIVKL. A helical membrane pass occupies residues 445-469; the sequence is TPKDQFIIAYGGLRGAIAFSLGYLL. Residues 470-475 lie on the Extracellular side of the membrane; sequence DKKHFP. A helical membrane pass occupies residues 476–505; the sequence is MCDLFLTAIITVIFFTVFVQGMTIRPLVDL. The interaction with TESC stretch occupies residues 503–545; sequence VDLLAVKKKQETKRSINEEIHTQFLDHLLTGIEDICGHYGHHH. Over 506-818 the chain is Cytoplasmic; sequence LAVKKKQETK…EGEPFIPKGQ (313 aa). Residues 509 to 516 are PI(4,5)P2-binding region; that stretch reads KKKQETKR. An interaction with CHP2 region spans residues 515-545; sequence KRSINEEIHTQFLDHLLTGIEDICGHYGHHH. Residues 540-545 form a confers pH-dependent PI(4,5)P2 binding region; that stretch reads HYGHHH. The segment at 552-560 is PI(4,5)P2-binding region; the sequence is RFNKKYVKK. Phosphoserine occurs at positions 599 and 602. T603 is subject to Phosphothreonine. Phosphoserine is present on residues S605 and S648. An interaction with TESC region spans residues 633-818; the sequence is KILRNNLQKT…EGEPFIPKGQ (186 aa). The interaction with CALM1 stretch occupies residues 633–818; the sequence is KILRNNLQKT…EGEPFIPKGQ (186 aa). The interval 684-687 is interaction with PPP3CA; it reads LTVP. Phosphoserine occurs at positions 693, 697, and 703. The interval 715–720 is interaction with PPP3CA; the sequence is PVITID. S723, S726, and S729 each carry phosphoserine. Residues 741-818 are disordered; the sequence is VLGLSRDPGR…EGEPFIPKGQ (78 aa). Position 782 is a phosphothreonine (T782). The span at 785-794 shows a compositional bias: polar residues; sequence PSDSPSSQRI. A phosphoserine mark is found at S788, S790, and S799.

Belongs to the monovalent cation:proton antiporter 1 (CPA1) transporter (TC 2.A.36) family. Homodimer; dimerization is crucial for its function. Oligomer. Interacts with CALM in a calcium-dependent manner. Interacts with TESC. Interacts (via the juxtamembrane region of the cytoplasmic C-terminal domain) with CHP1; the interaction occurs at the plasma membrane in a calcium-dependent manner. Interacts with CHP2; the interaction occurs in a calcium-dependent manner. Interacts with EZR; regulates the cytoskeletal interactions of SLC9A1 and promotes stress fiber formation. Post-translationally, ubiquitinated, leading to its degradation by the proteasome. Ubiquitination is reduced by CHP1. O-glycosylated. In terms of processing, palmitoylated; may play a major role in SLC9A1 regulation. Post-translationally, phosphorylation at Thr-782 increases SLC9A1 activity. Specifically dephosphorylated at Thr-782 by PPP3CA that negatively regulates SLC9A1 activity. Phosphorylation at Ser-648 by AKT1 reduces SLC9A1 binding to CALM1.

It is found in the cell membrane. Its subcellular location is the basolateral cell membrane. The enzyme catalyses Na(+)(in) + H(+)(out) = Na(+)(out) + H(+)(in). It catalyses the reaction Li(+)(out) + H(+)(in) = Li(+)(in) + H(+)(out). It carries out the reaction Li(+)(in) + Na(+)(out) = Li(+)(out) + Na(+)(in). Its activity is regulated as follows. Activated at acidic pHs. Inhibited by amiloride and 5-amino-substituted derivatives. Inhibited by cariporide and eniporide. Phosphatidylinositol 4,5-bisphosphate (PI(4,5)P2) and phosphatidylinositol 3,4,5-trisphosphate (PI(3,4,5)P3) bind and differentially regulate SLC9A1 activity. Electroneutral Na(+) /H(+) antiporter that extrudes Na(+) in exchange for external protons driven by the inward sodium ion chemical gradient, protecting cells from acidification that occurs from metabolism. Exchanges intracellular H(+) ions for extracellular Na(+) in 1:1 stoichiometry. Plays a key role in maintening intracellular pH neutral and cell volume, and thus is important for cell growth, proliferation, migration and survival. In addition, can transport lithium Li(+) and also functions as a Na(+)/Li(+) antiporter. SLC9A1 also functions in membrane anchoring and organization of scaffolding complexes that coordinate signaling inputs. The protein is Sodium/hydrogen exchanger 1 (SLC9A1) of Bos taurus (Bovine).